The sequence spans 261 residues: Phosphoadenosine phosphosulfate reductase (261 aa).

Belongs to the PAPS reductase family. CysH subfamily.

It catalyses the reaction [thioredoxin]-disulfide + sulfite + adenosine 3',5'-bisphosphate + 2 H(+) = [thioredoxin]-dithiol + 3'-phosphoadenylyl sulfate. The protein operates within sulfur metabolism; hydrogen sulfide biosynthesis; sulfite from sulfate: step 3/3. Functionally, the NADP dependent reduction of PAPS into sulfite involves thioredoxin which probably plays the role of a thiol carrier. The protein is Phosphoadenosine phosphosulfate reductase (MET16) of Saccharomyces cerevisiae (strain ATCC 204508 / S288c) (Baker's yeast).